The following is a 287-amino-acid chain: Orotidine 5'-phosphate decarboxylase (287 aa).

Residue lysine 97 is the Proton donor of the active site.

It belongs to the OMP decarboxylase family. Type 2 subfamily.

The enzyme catalyses orotidine 5'-phosphate + H(+) = UMP + CO2. Its pathway is pyrimidine metabolism; UMP biosynthesis via de novo pathway; UMP from orotate: step 2/2. This is Orotidine 5'-phosphate decarboxylase from Clostridium perfringens (strain ATCC 13124 / DSM 756 / JCM 1290 / NCIMB 6125 / NCTC 8237 / Type A).